The sequence spans 1179 residues: Serine/threonine-protein kinase pakG (1179 aa).

A coiled-coil region spans residues 12–53 (SKTNEDIELIKQKLKEDRELLEKERAQFEEERKIIFESLNKV). The 14-residue stretch at 111–124 (IGTPFNVQHKVHVD) folds into the CRIB domain. One can recognise a Protein kinase domain in the interval 139 to 390 (FLIDCILGTG…AIELLTHPFL (252 aa)). ATP is bound by residues 145-153 (LGTGSYGTV) and lysine 168. Residue aspartate 257 is the Proton acceptor of the active site. Disordered regions lie at residues 414–469 (KKKK…SSLD), 589–631 (IGNS…NNNN), 705–1086 (SSSS…PITL), and 1121–1179 (TEIN…SPKK). Residues 621–668 (NNNNNNNNNNNEFLINQIKKELILDFNENMKQYINQQLTNLKEEMLKE) adopt a coiled-coil conformation. 2 stretches are compositionally biased toward low complexity: residues 705-723 (SSSS…SNSS) and 743-761 (LPPS…TSSP). Residues 762 to 776 (SPSPSPSPSPSPSSP) show a composition bias toward pro residues. Low complexity-rich tracts occupy residues 777-788 (LPSSSTSTVNTP) and 812-833 (NNNN…NNNN). Residues 834 to 857 (VIQSPKLNNRPLSPTTPTKQFNNR) show a composition bias toward polar residues. Over residues 864–891 (FNNRPPSPSKFNNRPPSPSNRPLSPKNS) the composition is skewed to low complexity. Positions 892 to 946 (YNSLEKSNNGSISNNRPLSPKNSLEKSTTQNNTSSEDISTTTVTVTSEQGGTPIT) are enriched in polar residues. The segment covering 954–963 (RPKPSPPPIP) has biased composition (pro residues). Composition is skewed to low complexity over residues 964–997 (MNKS…TIAA), 1024–1046 (TTIT…SPNS), and 1053–1077 (ITTS…SSSN). A compositionally biased stretch (polar residues) spans 1121 to 1135 (TEINLPSSSPSTPQK). Residues 1137–1158 (NTPSSIPTTPTTPTTNGGSVSS) show a composition bias toward low complexity.

It belongs to the protein kinase superfamily. STE Ser/Thr protein kinase family. STE20 subfamily. The cofactor is Mg(2+).

The enzyme catalyses L-seryl-[protein] + ATP = O-phospho-L-seryl-[protein] + ADP + H(+). It catalyses the reaction L-threonyl-[protein] + ATP = O-phospho-L-threonyl-[protein] + ADP + H(+). The sequence is that of Serine/threonine-protein kinase pakG from Dictyostelium discoideum (Social amoeba).